Reading from the N-terminus, the 747-residue chain is Elastin (747 aa).

The signal sequence occupies residues 1 to 26; sequence MRSLTAAARRPEVLLLLLCILQPSQP. P34, P65, and P87 each carry 4-hydroxyproline. 2 positions are modified to allysine: K105 and K109. 4-hydroxyproline occurs at positions 165, 178, and 181. A Hydroxyproline modification is found at P188. P201 bears the 4-hydroxyproline mark. K252, K271, and K275 each carry allysine. A 4-hydroxyproline mark is found at P298 and P302. Residues K324 and K327 each carry the allysine modification. A 4-hydroxyproline mark is found at P335, P365, P370, P375, P380, and P385. Residues K400, K404, K407, K445, and K448 each carry the allysine modification. 4-hydroxyproline is present on residues P462 and P478. Allysine occurs at positions 489 and 493. A 4-hydroxyproline modification is found at P513. Allysine is present on residues K544, K548, and K552. 5 positions are modified to 4-hydroxyproline: P566, P575, P584, P593, and P599. Allysine occurs at positions 606 and 609. P630 bears the 4-hydroxyproline mark. An allysine mark is found at K645, K649, K685, and K688. 4-hydroxyproline is present on residues P719 and P733. A disulfide bridge links C737 with C742.

This sequence belongs to the elastin family. In terms of assembly, the polymeric elastin chains are cross-linked together into an extensible 3D network. Forms a ternary complex with BGN and MFAP2. Interacts with MFAP2 via divalent cations (calcium &gt; magnesium &gt; manganese) in a dose-dependent and saturating manner. Interacts with FBLN5 and FBN1. Forms a ternary complex with FBN1 and FBLN2 or FBLN5. Interacts with MFAP4 in a Ca (2+)-dependent manner; this interaction promotes ELN self-assembly. Interacts with EFEMP2 with moderate affinity. In terms of processing, elastin is formed through the cross-linking of its soluble precursor tropoelastin. Cross-linking is initiated through the action of lysyl oxidase on exposed lysines to form allysine. Subsequent spontaneous condensation reactions with other allysine or unmodified lysine residues result in various bi-, tri-, and tetrafunctional cross-links. The most abundant cross-links in mature elastin fibers are lysinonorleucine, allysine aldol, desmosine, and isodesmosine. Post-translationally, hydroxylation on proline residues within the sequence motif, GXPG, is most likely to be 4-hydroxy as this fits the requirement for 4-hydroxylation in vertebrates.

The protein localises to the secreted. It localises to the extracellular space. It is found in the extracellular matrix. Its function is as follows. Major structural protein of tissues such as aorta and nuchal ligament, which must expand rapidly and recover completely. Molecular determinant of the late arterial morphogenesis, stabilizing arterial structure by regulating proliferation and organization of vascular smooth muscle. The chain is Elastin (ELN) from Bos taurus (Bovine).